The primary structure comprises 736 residues: DNA topoisomerase 1 (736 aa).

The 112-residue stretch at 2 to 113 folds into the Toprim domain; sequence KHLIIVESPA…SYPRIVFHEI (112 aa). 2 residues coordinate Mg(2+): glutamate 8 and aspartate 82. One can recognise a Topo IA-type catalytic domain in the interval 129–552; the sequence is DMSKVNAQQA…DFYYPFMDKI (424 aa). The segment at 163–168 is interaction with DNA; sequence SAGRVQ. Tyrosine 297 functions as the O-(5'-phospho-DNA)-tyrosine intermediate in the catalytic mechanism. C4-type zinc fingers lie at residues 572–598, 616–642, 663–689, and 702–725; these read CPKC…YPKC, CEKC…YPEC, CPEC…YPKC, and CEKC…CIKC.

Belongs to the type IA topoisomerase family. As to quaternary structure, monomer. The cofactor is Mg(2+).

It catalyses the reaction ATP-independent breakage of single-stranded DNA, followed by passage and rejoining.. Its function is as follows. Releases the supercoiling and torsional tension of DNA, which is introduced during the DNA replication and transcription, by transiently cleaving and rejoining one strand of the DNA duplex. Introduces a single-strand break via transesterification at a target site in duplex DNA. The scissile phosphodiester is attacked by the catalytic tyrosine of the enzyme, resulting in the formation of a DNA-(5'-phosphotyrosyl)-enzyme intermediate and the expulsion of a 3'-OH DNA strand. The free DNA strand then undergoes passage around the unbroken strand, thus removing DNA supercoils. Finally, in the religation step, the DNA 3'-OH attacks the covalent intermediate to expel the active-site tyrosine and restore the DNA phosphodiester backbone. In Helicobacter pylori (strain ATCC 700392 / 26695) (Campylobacter pylori), this protein is DNA topoisomerase 1.